Consider the following 183-residue polypeptide: NADH-quinone oxidoreductase subunit A (183 aa).

A run of 3 helical transmembrane segments spans residues Ile11–Leu31, Phe63–Trp83, and Met98–Leu118. The disordered stretch occupies residues Gly160–Glu183. Over residues Ala164–Glu183 the composition is skewed to polar residues.

This sequence belongs to the complex I subunit 3 family. In terms of assembly, NDH-1 is composed of 14 different subunits. Subunits NuoA, H, J, K, L, M, N constitute the membrane sector of the complex.

Its subcellular location is the cell inner membrane. The enzyme catalyses a quinone + NADH + 5 H(+)(in) = a quinol + NAD(+) + 4 H(+)(out). Functionally, NDH-1 shuttles electrons from NADH, via FMN and iron-sulfur (Fe-S) centers, to quinones in the respiratory chain. The immediate electron acceptor for the enzyme in this species is believed to be ubiquinone. Couples the redox reaction to proton translocation (for every two electrons transferred, four hydrogen ions are translocated across the cytoplasmic membrane), and thus conserves the redox energy in a proton gradient. This is NADH-quinone oxidoreductase subunit A from Acinetobacter baylyi (strain ATCC 33305 / BD413 / ADP1).